The following is a 1276-amino-acid chain: Receptor-type guanylate cyclase gcy-28 (1276 aa).

Positions Met1 to Gly18 are cleaved as a signal peptide. The Extracellular portion of the chain corresponds to Asn19–His515. N-linked (GlcNAc...) asparagine glycans are attached at residues Asn87, Asn196, Asn338, Asn384, Asn387, Asn414, Asn428, and Asn444. A helical transmembrane segment spans residues Val516–Phe536. Residues Trp537–Ala1276 lie on the Cytoplasmic side of the membrane. 2 disordered regions span residues Glu562–Lys601 and Ile635–Leu709. Residues Asn567–Asn577 show a composition bias toward basic residues. 2 stretches are compositionally biased toward polar residues: residues Arg590–Ser599 and Thr642–Lys660. In terms of domain architecture, Protein kinase spans Ser717–Leu1013. Residues Phe723 to Val731 and Lys756 each bind ATP. The stretch at Asn1017–Leu1063 forms a coiled coil. The Guanylate cyclase domain occupies Thr1086–Glu1215. 3 residues coordinate Mg(2+): Asp1091, Ile1092, and Asp1135.

The protein belongs to the adenylyl cyclase class-4/guanylyl cyclase family. As to expression, expressed in head neurons, ventral cord and tail neurons, body wall muscle, hypodermis, somatic gonad and intestine. Isoform d is expressed specifically in AIA interneurons.

Its subcellular location is the cell membrane. The protein localises to the cell projection. It is found in the dendrite. It localises to the axon. The protein resides in the perikaryon. It catalyses the reaction GTP = 3',5'-cyclic GMP + diphosphate. Guanylate cyclase involved in the production of the second messenger cGMP. Regulates olfactory perception in AWC sensory neurons although may not be involved in the primary sensory transduction steps. Its function is as follows. Isoforms c: Regulates sensory integration of conflicting sensory cues in AIA interneurons. Functionally, regulates sensory integration of conflicting sensory cues in AIA interneurons. The sequence is that of Receptor-type guanylate cyclase gcy-28 from Caenorhabditis elegans.